The following is a 313-amino-acid chain: Protoheme IX farnesyltransferase (313 aa).

9 consecutive transmembrane segments (helical) span residues 29 to 49 (VISLLLWTTVTAMFMAARGWP), 57 to 77 (LWLLIVVSVAGYMSAGSAGVF), 101 to 123 (LISSRNAAIFGTTLQVLSFVMLW), 124 to 144 (VWGTPLAAWMSLAGFVFYVVI), 157 to 177 (IVIGGAAGCFPPLVGWAAVTG), 185 to 205 (YLFAIIFFWTPVHFWALALMI), 225 to 245 (MTVAQIGLYAIYTVVLSLMPV), 247 to 267 (FGAVSWIYFVSGALLGAWLLW), and 287 to 307 (AVPLYLYSMLYLALLFLAGAI).

This sequence belongs to the UbiA prenyltransferase family. Protoheme IX farnesyltransferase subfamily.

The protein resides in the cell membrane. It carries out the reaction heme b + (2E,6E)-farnesyl diphosphate + H2O = Fe(II)-heme o + diphosphate. It participates in porphyrin-containing compound metabolism; heme O biosynthesis; heme O from protoheme: step 1/1. In terms of biological role, converts heme B (protoheme IX) to heme O by substitution of the vinyl group on carbon 2 of heme B porphyrin ring with a hydroxyethyl farnesyl side group. The sequence is that of Protoheme IX farnesyltransferase from Deinococcus radiodurans (strain ATCC 13939 / DSM 20539 / JCM 16871 / CCUG 27074 / LMG 4051 / NBRC 15346 / NCIMB 9279 / VKM B-1422 / R1).